The primary structure comprises 146 residues: Leghemoglobin Lb120-29 (146 aa).

The 145-residue stretch at 2-146 (GFTDKQEALV…LASAIKKAMS (145 aa)) folds into the Globin domain. A nitrated tyrosine mark is found at Tyr-24 and Tyr-29. Ser-44 serves as a coordination point for heme b. The residue at position 44 (Ser-44) is a Phosphoserine. His-61 contacts O2. Residues Lys-64, His-93, and Lys-96 each contribute to the heme b site. Tyr-134 bears the Nitrated tyrosine mark.

This sequence belongs to the plant globin family. Monomer. In terms of processing, nitrated in effective nodules and particularly in hypoxic conditions; this mechanism may play a protective role in the symbiosis by buffering toxic peroxynitrite NO(2)(-). Nitration level decrease during nodule senescence. Post-translationally, phosphorylation at Ser-44 disrupts the molecular environment of its porphyrin ring oxygen binding pocket, thus leading to a reduced oxygen consumption and to the delivery of oxygen O(2) to symbiosomes. In terms of tissue distribution, root nodules.

The protein resides in the cytoplasm. It localises to the cytosol. The protein localises to the nucleus. In terms of biological role, leghemoglobin that reversibly binds oxygen O(2) through a pentacoordinated heme iron. In root nodules, facilitates the diffusion of oxygen to the bacteroids while preventing the bacterial nitrogenase from being inactivated by buffering dioxygen, nitric oxide and carbon monoxide, and promoting the formation of reactive oxygen species (ROS, e.g. H(2)O(2)). This role is essential for symbiotic nitrogen fixation (SNF). The protein is Leghemoglobin Lb120-29 of Pisum sativum (Garden pea).